A 786-amino-acid polypeptide reads, in one-letter code: UPF0313 protein SO_0311 (786 aa).

The Radical SAM core domain occupies 371-649 (AYDMIKTSIN…KALLRYHDPA (279 aa)). 3 residues coordinate [4Fe-4S] cluster: cysteine 385, cysteine 389, and cysteine 392. Disordered regions lie at residues 669–688 (NSPN…PKWM) and 698–786 (LTRF…QQAK). Basic and acidic residues-rich tracts occupy residues 679–688 (GRNERGPKWM) and 706–717 (FDERKGKGDAKG). Over residues 718–731 (KPSASKPKGPKSGA) the composition is skewed to low complexity. Over residues 732–741 (NAPQSQQPKT) the composition is skewed to polar residues.

It belongs to the UPF0313 family. [4Fe-4S] cluster is required as a cofactor.

This chain is UPF0313 protein SO_0311, found in Shewanella oneidensis (strain ATCC 700550 / JCM 31522 / CIP 106686 / LMG 19005 / NCIMB 14063 / MR-1).